The sequence spans 282 residues: Parvulin-like PPIase (282 aa).

The N-terminal stretch at 1 to 20 (MKKLSVIFLSVSMLSSIAFG) is a signal peptide. The PpiC domain occupies 138 to 231 (KEQIKVAHIL…FGWHIIKVLE (94 aa)).

It belongs to the PpiC/parvulin rotamase family.

The protein localises to the cell outer membrane. The catalysed reaction is [protein]-peptidylproline (omega=180) = [protein]-peptidylproline (omega=0). In Rickettsia prowazekii (strain Madrid E), this protein is Parvulin-like PPIase (plp).